Consider the following 213-residue polypeptide: Phosphoribosyl-dephospho-CoA transferase (213 aa).

Catalysis depends on residues D135 and D137.

It belongs to the MdcG family.

It carries out the reaction apo-[malonate decarboxylase ACP] + 2'-(5''-triphospho-alpha-D-ribosyl)-3'-dephospho-CoA = holo-[malonate decarboxylase ACP] + diphosphate. Transfers 2'-(5-triphosphoribosyl)-3'-dephosphocoenzyme-A to the apo-[acyl-carrier-protein] of the malonate decarboxylase to yield holo-[acyl-carrier-protein]. The polypeptide is Phosphoribosyl-dephospho-CoA transferase (Xanthomonas campestris pv. campestris (strain ATCC 33913 / DSM 3586 / NCPPB 528 / LMG 568 / P 25)).